The chain runs to 353 residues: Phospho-N-acetylmuramoyl-pentapeptide-transferase (353 aa).

The next 10 membrane-spanning stretches (helical) occupy residues 22–42 (FAFF…ITWA), 65–85 (TPTM…LFCI), 88–108 (DNIF…IGLI), 129–149 (LLAQ…SSEL), 161–181 (PLFD…ISSS), 192–212 (GLAT…LYLS), 228–248 (GLGE…GFLW), 256–276 (VFMG…LAVI), 281–301 (ILLL…ILQV), and 330–350 (KIIV…LASI).

The protein belongs to the glycosyltransferase 4 family. MraY subfamily. The cofactor is Mg(2+).

The protein resides in the cell inner membrane. The catalysed reaction is UDP-N-acetyl-alpha-D-muramoyl-L-alanyl-gamma-D-glutamyl-meso-2,6-diaminopimeloyl-D-alanyl-D-alanine + di-trans,octa-cis-undecaprenyl phosphate = di-trans,octa-cis-undecaprenyl diphospho-N-acetyl-alpha-D-muramoyl-L-alanyl-D-glutamyl-meso-2,6-diaminopimeloyl-D-alanyl-D-alanine + UMP. The protein operates within cell wall biogenesis; peptidoglycan biosynthesis. Functionally, catalyzes the initial step of the lipid cycle reactions in the biosynthesis of the cell wall peptidoglycan: transfers peptidoglycan precursor phospho-MurNAc-pentapeptide from UDP-MurNAc-pentapeptide onto the lipid carrier undecaprenyl phosphate, yielding undecaprenyl-pyrophosphoryl-MurNAc-pentapeptide, known as lipid I. This chain is Phospho-N-acetylmuramoyl-pentapeptide-transferase, found in Campylobacter jejuni subsp. jejuni serotype O:2 (strain ATCC 700819 / NCTC 11168).